A 127-amino-acid chain; its full sequence is Classical arabinogalactan protein 10 (127 aa).

An N-terminal signal peptide occupies residues 1 to 21 (MASKSVVVLLFLALIASSAIA). A Pyrrolidone carboxylic acid modification is found at Gln-22. A disordered region spans residues 22–107 (QAPGPAPTRS…TGSTPVDNNN (86 aa)). 5 positions are modified to 4-hydroxyproline: Pro-24, Pro-26, Pro-28, Pro-32, and Pro-36. O-linked (Ara...) hydroxyproline glycosylation is found at Pro-24, Pro-26, Pro-28, Pro-32, and Pro-36. Composition is skewed to pro residues over residues 25–39 (GPAP…PAQP), 48–58 (SITPTPTPTPS), and 66–86 (VSPP…PPTS). A compositionally biased stretch (polar residues) spans 98 to 107 (TGSTPVDNNN). The GPI-anchor amidated asparagine moiety is linked to residue Asn-107. Positions 108–127 (AATLAAGSLAGFVFVASLLL) are cleaved as a propeptide — removed in mature form.

Belongs to the classical AGP family. In terms of processing, O-glycosylated on hydroxyprolines; noncontiguous hydroxylproline residues are glycosylated with arabinogalactan. Predominantly expressed in flowers and at a lower level in roots and siliques.

It localises to the cell membrane. Its function is as follows. Proteoglycan that seems to be implicated in diverse developmental roles such as differentiation, cell-cell recognition, embryogenesis and programmed cell death. The chain is Classical arabinogalactan protein 10 (AGP10) from Arabidopsis thaliana (Mouse-ear cress).